Reading from the N-terminus, the 149-residue chain is D-aminoacyl-tRNA deacylase (149 aa).

The Gly-cisPro motif, important for rejection of L-amino acids motif lies at G139 to P140.

This sequence belongs to the DTD family. Homodimer.

The protein resides in the cytoplasm. It carries out the reaction glycyl-tRNA(Ala) + H2O = tRNA(Ala) + glycine + H(+). It catalyses the reaction a D-aminoacyl-tRNA + H2O = a tRNA + a D-alpha-amino acid + H(+). In terms of biological role, an aminoacyl-tRNA editing enzyme that deacylates mischarged D-aminoacyl-tRNAs. Also deacylates mischarged glycyl-tRNA(Ala), protecting cells against glycine mischarging by AlaRS. Acts via tRNA-based rather than protein-based catalysis; rejects L-amino acids rather than detecting D-amino acids in the active site. By recycling D-aminoacyl-tRNA to D-amino acids and free tRNA molecules, this enzyme counteracts the toxicity associated with the formation of D-aminoacyl-tRNA entities in vivo and helps enforce protein L-homochirality. This is D-aminoacyl-tRNA deacylase (dtd1) from Schizosaccharomyces pombe (strain 972 / ATCC 24843) (Fission yeast).